A 146-amino-acid polypeptide reads, in one-letter code: Ribonuclease H (146 aa).

Residues 1-141 (MKKVQLITDG…CDELATRAAR (141 aa)) form the RNase H type-1 domain. The Mg(2+) site is built by Asp9, Glu47, Asp69, and Asp133.

It belongs to the RNase H family. Monomer. Mg(2+) is required as a cofactor.

It is found in the cytoplasm. It carries out the reaction Endonucleolytic cleavage to 5'-phosphomonoester.. Functionally, endonuclease that specifically degrades the RNA of RNA-DNA hybrids. The polypeptide is Ribonuclease H (Solibacter usitatus (strain Ellin6076)).